We begin with the raw amino-acid sequence, 384 residues long: BarH-like 2 homeobox protein (384 aa).

3 disordered regions span residues 1-134 (MTAM…APRT), 154-237 (CAPY…TAFS), and 364-384 (PGGQ…PHPR). Residues 119 to 134 (QSAAQQLGSAAAAPRT) are compositionally biased toward low complexity. The span at 177 to 217 (ESFRPKLEQEDSKTKLDKREDSQSDIKCHGTKEEGDREITS) shows a compositional bias: basic and acidic residues. Residues 229–288 (PRKARTAFSDHQLNQLERSFERQKYLSVQDRMDLAAALNLTDTQVKTWYQNRRTKWKRQT) constitute a DNA-binding region (homeobox).

Belongs to the BAR homeobox family. As to expression, expressed in the ganglion cell layer of the retina in the eye and in the ventral zone of the dorsal thalamus of the CNS.

Its subcellular location is the nucleus. In terms of biological role, potential regulator of neural basic helix-loop-helix genes. It may down-regulate expression of ASCL1 and, within the thalamus, up-regulate NGN2, thereby regulating distinct patterns of neuronal differentiation. The protein is BarH-like 2 homeobox protein (Barhl2) of Rattus norvegicus (Rat).